Here is a 566-residue protein sequence, read N- to C-terminus: Protein OBERON 1 (566 aa).

The span at 1 to 10 (MGTSSGSNLP) shows a compositional bias: polar residues. A disordered region spans residues 1-79 (MGTSSGSNLP…KTGPDSHDQH (79 aa)). Positions 18–29 (QQLQTSLSLVSS) are enriched in low complexity. The span at 47–60 (ESASSQETWPTSKS) shows a compositional bias: polar residues. Residues 64–79 (RKTDSGKTGPDSHDQH) are compositionally biased toward basic and acidic residues. The PHD-type zinc finger occupies 225–289 (LCMCVICNKF…LFKCRACNHT (65 aa)). A coiled-coil region spans residues 407–522 (EEKTRMYKKA…LFEKIKEQES (116 aa)). The segment at 545–566 (YNASSPRVDPRSNQRNPFRSNP) is disordered. Residues 555-566 (RSNQRNPFRSNP) are compositionally biased toward polar residues.

As to quaternary structure, self-interacts. Interacts with OBE2, OBE3 and OBE4. Binds to VPg of pea seed borne mosaic virus (PSbMV), turnip mosaic virus (TuMV) and lettuce mosaic virus (LMV), but not with VPg of tobacco etch virus (TEV), cowpea mosaic virus (CPMV), tomato black ring virus (TBRV) and grapevine fan leaf virus (GFLV). Interacts with RBL. Expressed in roots, seedlings, stems, leaves, flowers and siliques, especially in the vasculature.

The protein localises to the nucleus. The protein resides in the nucleoplasm. Its function is as follows. Probable transcription factor that acts together with OBE2 for the maintenance and/or establishment of both the shoot and root meristems, probably by controlling the expression of the meristem genes such as WUS, PLT1 and PLT2 and of genes required for auxin responses. Promotes cell meristematic activity via the WUSCHEL-CLAVATA pathway. Involved in the development of the basal pole and in auxin-mediated root and vascular development in the embryo. Confers sensitivity to turnip mosaic virus (TuMV) probably by promoting viral movement and multiplication via interaction with TuMV VPg. The protein is Protein OBERON 1 of Arabidopsis thaliana (Mouse-ear cress).